A 363-amino-acid polypeptide reads, in one-letter code: Histidinol-phosphate aminotransferase (363 aa).

Position 218 is an N6-(pyridoxal phosphate)lysine (lysine 218).

It belongs to the class-II pyridoxal-phosphate-dependent aminotransferase family. Histidinol-phosphate aminotransferase subfamily. Homodimer. Pyridoxal 5'-phosphate is required as a cofactor.

The catalysed reaction is L-histidinol phosphate + 2-oxoglutarate = 3-(imidazol-4-yl)-2-oxopropyl phosphate + L-glutamate. It functions in the pathway amino-acid biosynthesis; L-histidine biosynthesis; L-histidine from 5-phospho-alpha-D-ribose 1-diphosphate: step 7/9. This Xanthomonas axonopodis pv. citri (strain 306) protein is Histidinol-phosphate aminotransferase.